The primary structure comprises 206 residues: Somatotropin (206 aa).

Residues methionine 1–glutamine 22 form the signal peptide. 2 disulfides stabilise this stretch: cysteine 75–cysteine 179 and cysteine 196–cysteine 204.

This sequence belongs to the somatotropin/prolactin family.

It localises to the secreted. In terms of biological role, growth hormone plays an important role in growth control and is involved in the regulation of several anabolic processes. Implicated as an osmoregulatory substance important for seawater adaptation. This is Somatotropin (gh) from Protopterus annectens (African lungfish).